The chain runs to 508 residues: Pancreatic alpha-amylase (508 aa).

An N-terminal signal peptide occupies residues 1–15 (MKFVLLLSLIGFCWA). Position 16 is a pyrrolidone carboxylic acid (Q16). 3 cysteine pairs are disulfide-bonded: C43–C101, C85–C130, and C156–C172. N115, R170, and D179 together coordinate Ca(2+). R207 serves as a coordination point for chloride. The active-site Nucleophile is the D209. H213 serves as a coordination point for Ca(2+). Residue E245 is the Proton donor of the active site. Chloride is bound by residues N310 and R349. Disulfide bonds link C390–C396 and C462–C474.

Belongs to the glycosyl hydrolase 13 family. Monomer. Ca(2+) serves as cofactor. Requires chloride as cofactor.

It localises to the secreted. The protein localises to the extracellular space. The enzyme catalyses Endohydrolysis of (1-&gt;4)-alpha-D-glucosidic linkages in polysaccharides containing three or more (1-&gt;4)-alpha-linked D-glucose units.. The protein is Pancreatic alpha-amylase (Amy2) of Rattus norvegicus (Rat).